Consider the following 528-residue polypeptide: Cytochrome P450 1A5 (528 aa).

C467 provides a ligand contact to heme.

It belongs to the cytochrome P450 family. It depends on heme as a cofactor.

Its subcellular location is the endoplasmic reticulum membrane. It localises to the microsome membrane. It catalyses the reaction an organic molecule + reduced [NADPH--hemoprotein reductase] + O2 = an alcohol + oxidized [NADPH--hemoprotein reductase] + H2O + H(+). Its function is as follows. Cytochromes P450 are a group of heme-thiolate monooxygenases. In liver microsomes, this enzyme is involved in an NADPH-dependent electron transport pathway. It oxidizes a variety of structurally unrelated compounds, including steroids, fatty acids, and xenobiotics. The polypeptide is Cytochrome P450 1A5 (CYP1A5) (Gallus gallus (Chicken)).